Reading from the N-terminus, the 74-residue chain is Auswaprin-a (74 aa).

The signal sequence occupies residues 1 to 24 (MSSGGLLLLLGLLTLWGVLTPVSS). In terms of domain architecture, WAP spans 27–71 (RPKKPGLCPPRPQKPCVKECKNDWSCSGQQKCCNYGCIDECRDPI). Disulfide bonds link C34–C59, C42–C63, C46–C58, and C52–C67.

The protein belongs to the venom waprin family. As to expression, expressed by the venom gland.

The protein resides in the secreted. Its function is as follows. Damages membranes of susceptible bacteria. Has no hemolytic activity. Not toxic to mice. Does not inhibit the proteinases elastase and cathepsin G. The chain is Auswaprin-a from Pseudechis australis (Mulga snake).